Reading from the N-terminus, the 348-residue chain is Protein RecA (348 aa).

Residue 64–71 (GPESSGKT) coordinates ATP.

The protein belongs to the RecA family. As to quaternary structure, monomer; forms higher-order oligomers. Interacts with RecU. Interacts with DprA (smf). Interacts with RecD2.

The protein localises to the cytoplasm. Its subcellular location is the nucleoid. In terms of biological role, multifunctional protein involved in homologous recombination, DNA repair and competence. Can catalyze the hydrolysis of (d)ATP in the presence of single-stranded (ss)DNA; prefers dATP at least in vitro, catalyzes the dATP-dependent uptake of ssDNA by duplex DNA, and the dATP-dependent hybridization of homologous ssDNA (strand exchange). RecA-ATP cannot catalyze homologous DNA strand exchange; SsbA and DprA activate strand exchange by RecA-ATP. It interacts with LexA causing its activation and leading to its autocatalytic cleavage. Hydrolysis of ATP in the presence of ssDNA is partially inhibited by RecU. Required for DNA transformation; protects transforming DNA from degradation, possibly in combination with DprA. Blocks replication of both leading and lagging strand DNA in the presence of RecO and SsbA; RecD2 is able to overcome this blockage. Recruited to repair centers (RCs), foci that are the site of double-stranded DNA break(s), after RecN. Concomitant with the appearance of RecO at the RCs, RecA forms threads that extend from RCs toward the opposite cell half, possibly searching for sequence homology along the sister chromosome. The threads disappear after about 2 hours. Thread formation is absolutely dependent on RecJ or AadAB. Thread formation is also dependent on RarA. This is Protein RecA from Bacillus subtilis (strain 168).